A 222-amino-acid polypeptide reads, in one-letter code: Ribosomal RNA small subunit methyltransferase G (222 aa).

Residues G85, L90, 108 to 110, 136 to 137, and R150 contribute to the S-adenosyl-L-methionine site; these read DAT and VE.

The protein belongs to the methyltransferase superfamily. RNA methyltransferase RsmG family.

Its subcellular location is the cytoplasm. In terms of biological role, specifically methylates the N7 position of a guanine in 16S rRNA. The sequence is that of Ribosomal RNA small subunit methyltransferase G from Chlorobium phaeobacteroides (strain DSM 266 / SMG 266 / 2430).